Consider the following 335-residue polypeptide: MTEIYDFDKSAWDIKGSIAPIQPTTYSDGRLVPQVRVIDPGLGDRKDECFMYMFLLGVVEDSDPLGPPIGRAFGSLPLGVGRSTAKPEKLLKEATELDIVVRRTAGLNEKLVFYNNTPLTLLTPWRKVLTTGSVFNANQVCSAVNLIPLDTPQRFRVVYMSITRLSDNGYYTVPRRMLEFRSVNAVAFNLLVTLRIDKAIGPGKIIDNTEQLPEATFMVHIGNFRRKKSEVYSADYCKMKIEKMGLVFALGGIGGTSLHIRSTGKMSKTLHAQLGFKKTLCYPLMDINEDLNRLLWRSRCKIVRIQAVLQPSVPQEFRIYDDVIINDDQGLFKVL.

This sequence belongs to the morbillivirus/respirovirus/rubulavirus M protein family. In terms of assembly, homodimer. Dimerization is critical for virion formation. Interacts with host ANP32B.

It is found in the virion. It localises to the host cell membrane. Functionally, the M protein has a crucial role in virus assembly and interacts with the RNP complex as well as with the viral membrane. Associates with phosphatidylserine (PS) and phosphatidylinositol 4,5-bisphosphate (PIP2) at the plasma membrane. Interaction with PIP2 triggers matrix protein lattice polymerization. Matrix proteins induce host membrane deformation and curvature necessary for virion assembly/budding. This chain is Matrix protein (M), found in Measles virus (strain Edmonston) (MeV).